Here is a 215-residue protein sequence, read N- to C-terminus: Ion-translocating oxidoreductase complex subunit G (215 aa).

Residues 9–29 traverse the membrane as a helical segment; it reads GLLLSGFALICTAAVALVNEA. Threonine 176 carries the post-translational modification FMN phosphoryl threonine.

The protein belongs to the RnfG family. The complex is composed of six subunits: RnfA, RnfB, RnfC, RnfD, RnfE and RnfG. The cofactor is FMN.

It is found in the cell inner membrane. In terms of biological role, part of a membrane-bound complex that couples electron transfer with translocation of ions across the membrane. This chain is Ion-translocating oxidoreductase complex subunit G, found in Shewanella amazonensis (strain ATCC BAA-1098 / SB2B).